The primary structure comprises 1080 residues: DNA-directed RNA polymerase subunit beta (1080 aa).

This sequence belongs to the RNA polymerase beta chain family. In plastids the minimal PEP RNA polymerase catalytic core is composed of four subunits: alpha, beta, beta', and beta''. When a (nuclear-encoded) sigma factor is associated with the core the holoenzyme is formed, which can initiate transcription.

It localises to the plastid. The protein localises to the chloroplast. The enzyme catalyses RNA(n) + a ribonucleoside 5'-triphosphate = RNA(n+1) + diphosphate. In terms of biological role, DNA-dependent RNA polymerase catalyzes the transcription of DNA into RNA using the four ribonucleoside triphosphates as substrates. The sequence is that of DNA-directed RNA polymerase subunit beta from Mesostigma viride (Green alga).